Reading from the N-terminus, the 308-residue chain is Oxygen-dependent coproporphyrinogen-III oxidase (308 aa).

S100 serves as a coordination point for substrate. Residues H104 and H114 each contribute to the a divalent metal cation site. The active-site Proton donor is the H114. 116–118 (NFR) contributes to the substrate binding site. The a divalent metal cation site is built by H153 and H183. The interval 248-283 (YVEFNLVFDRGTIFGLQSGGRTESILSSMPPMATWK) is important for dimerization. A substrate-binding site is contributed by 266–268 (GGR).

Belongs to the aerobic coproporphyrinogen-III oxidase family. Homodimer. The cofactor is a divalent metal cation.

The protein localises to the cytoplasm. It carries out the reaction coproporphyrinogen III + O2 + 2 H(+) = protoporphyrinogen IX + 2 CO2 + 2 H2O. Its pathway is porphyrin-containing compound metabolism; protoporphyrin-IX biosynthesis; protoporphyrinogen-IX from coproporphyrinogen-III (O2 route): step 1/1. Its function is as follows. Involved in the heme biosynthesis. Catalyzes the aerobic oxidative decarboxylation of propionate groups of rings A and B of coproporphyrinogen-III to yield the vinyl groups in protoporphyrinogen-IX. This chain is Oxygen-dependent coproporphyrinogen-III oxidase, found in Francisella philomiragia subsp. philomiragia (strain ATCC 25017 / CCUG 19701 / FSC 153 / O#319-036).